Reading from the N-terminus, the 318-residue chain is Homoserine kinase (318 aa).

97–107 (PIGSGLGSSAC) contacts ATP.

The protein belongs to the GHMP kinase family. Homoserine kinase subfamily.

Its subcellular location is the cytoplasm. The enzyme catalyses L-homoserine + ATP = O-phospho-L-homoserine + ADP + H(+). The protein operates within amino-acid biosynthesis; L-threonine biosynthesis; L-threonine from L-aspartate: step 4/5. Catalyzes the ATP-dependent phosphorylation of L-homoserine to L-homoserine phosphate. This is Homoserine kinase from Vibrio cholerae serotype O1 (strain M66-2).